A 462-amino-acid chain; its full sequence is Cleavage and polyadenylation specificity factor subunit 7 (462 aa).

2 disordered regions span residues 34-68 (VLTAASQPSDDRSSSTEPPPPVRQEPAPKPNNKTP) and 161-213 (TRQN…PSVL). Residues 50-62 (EPPPPVRQEPAPK) are compositionally biased toward pro residues. Residues 82-162 (AAVYVGSFSW…EKVDVRPATR (81 aa)) form the RRM domain. A compositionally biased stretch (basic and acidic residues) spans 181 to 190 (HSRDSSDSAD). Threonine 194 carries the post-translational modification Phosphothreonine. Serine 196 is subject to Phosphoserine. Residue lysine 345 forms a Glycyl lysine isopeptide (Lys-Gly) (interchain with G-Cter in SUMO2) linkage. The tract at residues 400–462 (SVGASGSSSR…HRDRERDRHH (63 aa)) is disordered. Phosphoserine occurs at positions 404 and 414. Positions 409–460 (RKRHRSRERSPSRSRESSRRHRDLLHNEDRHDDYFQERNREHERHRDRERDR) are arg/Ser-rich domain. Composition is skewed to basic and acidic residues over residues 416–425 (ERSPSRSRES) and 432–462 (LLHNEDRHDDYFQERNREHERHRDRERDRHH).

It belongs to the RRM CPSF6/7 family. Component of the cleavage factor Im (CFIm) complex which is a heterotetramer composed of two subunits of NUDT21/CPSF5 and two subunits of CPSF6 or CPSF7 or a heterodimer of CPSF6 and CPSF7. The cleavage factor Im (CFIm) complex associates with the CPSF and CSTF complexes to promote the assembly of the core mRNA 3'-processing machinery. Interacts with NUDT21/CPSF5. Interacts (via Arg/Ser-rich domain) with FIP1L1 (preferentially via unphosphorylated form and Arg/Glu/Asp-rich region); this interaction mediates, at least in part, the interaction between the CFIm and CPSF complexes and may be inhibited by CPSF7 hyper-phosphorylation. In terms of processing, phosphorylated. Asymmetrically dimethylated on arginine residues by PRMT1.

Its subcellular location is the nucleus. The protein localises to the cytoplasm. Component of the cleavage factor Im (CFIm) complex that functions as an activator of the pre-mRNA 3'-end cleavage and polyadenylation processing required for the maturation of pre-mRNA into functional mRNAs. CFIm contributes to the recruitment of multiprotein complexes on specific sequences on the pre-mRNA 3'-end, so called cleavage and polyadenylation signals (pA signals). Most pre-mRNAs contain multiple pA signals, resulting in alternative cleavage and polyadenylation (APA) producing mRNAs with variable 3'-end formation. The CFIm complex acts as a key regulator of cleavage and polyadenylation site choice during APA through its binding to 5'-UGUA-3' elements localized in the 3'-untranslated region (UTR) for a huge number of pre-mRNAs. CPSF7 activates directly the mRNA 3'-processing machinery. Binds to pA signals in RNA substrates. The polypeptide is Cleavage and polyadenylation specificity factor subunit 7 (Rattus norvegicus (Rat)).